The sequence spans 565 residues: Molybdenum cofactor biosynthesis protein 1 (565 aa).

The segment at 3–367 (LLARHAIRLL…AVQRKKKQHA (365 aa)) is molybdenum cofactor biosynthesis protein A. The region spanning 64-276 (SFGRHHTYLR…LQIIRQRWPD (213 aa)) is the Radical SAM core domain. Arg-73 provides a ligand contact to GTP. The [4Fe-4S] cluster site is built by Cys-80 and Cys-84. Tyr-86 lines the S-adenosyl-L-methionine pocket. Residue Cys-87 coordinates [4Fe-4S] cluster. Residue Arg-123 participates in GTP binding. S-adenosyl-L-methionine is bound at residue Gly-127. Thr-154 contributes to the GTP binding site. Ser-178 is a binding site for S-adenosyl-L-methionine. Lys-214 is a GTP binding site. Position 248 (Met-248) interacts with S-adenosyl-L-methionine. Residues Cys-311 and Cys-314 each coordinate [4Fe-4S] cluster. Position 316-318 (316-318 (RLR)) interacts with GTP. Residue Cys-328 coordinates [4Fe-4S] cluster. The active-site For molybdenum cofactor biosynthesis protein C activity is Asp-525.

The protein in the C-terminal section; belongs to the MoaC family. In the N-terminal section; belongs to the radical SAM superfamily. MoaA family. In terms of assembly, isoform Mocs1a and isoform Mocs1b probably form a heterooligomer. It depends on [4Fe-4S] cluster as a cofactor.

The catalysed reaction is GTP + AH2 + S-adenosyl-L-methionine = (8S)-3',8-cyclo-7,8-dihydroguanosine 5'-triphosphate + 5'-deoxyadenosine + L-methionine + A + H(+). It catalyses the reaction (8S)-3',8-cyclo-7,8-dihydroguanosine 5'-triphosphate = cyclic pyranopterin phosphate + diphosphate. It functions in the pathway cofactor biosynthesis; molybdopterin biosynthesis. In terms of biological role, isoform Mocs1a and isoform Mocs1b probably form a complex that catalyzes the conversion of 5'-GTP to cyclic pyranopterin monophosphate (cPMP). Mocs1a catalyzes the cyclization of GTP to (8S)-3',8-cyclo-7,8-dihydroguanosine 5'-triphosphate and Mocs1b catalyzes the subsequent conversion of (8S)-3',8-cyclo-7,8-dihydroguanosine 5'-triphosphate to cPMP. This is Molybdenum cofactor biosynthesis protein 1 (Mocs1) from Drosophila melanogaster (Fruit fly).